A 213-amino-acid polypeptide reads, in one-letter code: Urease accessory protein UreE (213 aa).

Residues 170–213 (EHHGRSHSHSHSHSHDHDHDHDHDHDHDHQHGPSCSHGHGHGHR) are disordered. A compositionally biased stretch (basic and acidic residues) spans 182-200 (HSHDHDHDHDHDHDHDHQH).

It belongs to the UreE family.

The protein resides in the cytoplasm. Functionally, involved in urease metallocenter assembly. Binds nickel. Probably functions as a nickel donor during metallocenter assembly. The chain is Urease accessory protein UreE from Burkholderia thailandensis (strain ATCC 700388 / DSM 13276 / CCUG 48851 / CIP 106301 / E264).